A 218-amino-acid chain; its full sequence is Methylthioribulose-1-phosphate dehydratase (218 aa).

H107 and H109 together coordinate Zn(2+).

The protein belongs to the aldolase class II family. MtnB subfamily. Zn(2+) serves as cofactor.

It carries out the reaction 5-(methylsulfanyl)-D-ribulose 1-phosphate = 5-methylsulfanyl-2,3-dioxopentyl phosphate + H2O. The protein operates within amino-acid biosynthesis; L-methionine biosynthesis via salvage pathway; L-methionine from S-methyl-5-thio-alpha-D-ribose 1-phosphate: step 2/6. Its function is as follows. Catalyzes the dehydration of methylthioribulose-1-phosphate (MTRu-1-P) into 2,3-diketo-5-methylthiopentyl-1-phosphate (DK-MTP-1-P). The chain is Methylthioribulose-1-phosphate dehydratase from Xylella fastidiosa (strain M12).